The chain runs to 227 residues: 7-cyano-7-deazaguanine synthase (227 aa).

ATP is bound at residue 8 to 18; the sequence is VSGGADSATVL. 4 residues coordinate Zn(2+): Cys192, Cys202, Cys205, and Cys208.

The protein belongs to the QueC family. Zn(2+) is required as a cofactor.

It carries out the reaction 7-carboxy-7-deazaguanine + NH4(+) + ATP = 7-cyano-7-deazaguanine + ADP + phosphate + H2O + H(+). It participates in purine metabolism; 7-cyano-7-deazaguanine biosynthesis. Its function is as follows. Catalyzes the ATP-dependent conversion of 7-carboxy-7-deazaguanine (CDG) to 7-cyano-7-deazaguanine (preQ(0)). In Rickettsia akari (strain Hartford), this protein is 7-cyano-7-deazaguanine synthase.